The chain runs to 485 residues: N-succinylglutamate 5-semialdehyde dehydrogenase (485 aa).

220 to 225 (GSANTG) is a binding site for NAD(+). Residues Glu243 and Cys278 contribute to the active site.

It belongs to the aldehyde dehydrogenase family. AstD subfamily.

The catalysed reaction is N-succinyl-L-glutamate 5-semialdehyde + NAD(+) + H2O = N-succinyl-L-glutamate + NADH + 2 H(+). It functions in the pathway amino-acid degradation; L-arginine degradation via AST pathway; L-glutamate and succinate from L-arginine: step 4/5. In terms of biological role, catalyzes the NAD-dependent reduction of succinylglutamate semialdehyde into succinylglutamate. The sequence is that of N-succinylglutamate 5-semialdehyde dehydrogenase from Aliivibrio fischeri (strain ATCC 700601 / ES114) (Vibrio fischeri).